A 115-amino-acid polypeptide reads, in one-letter code: Large ribosomal subunit protein bL19 (115 aa).

The protein belongs to the bacterial ribosomal protein bL19 family.

This protein is located at the 30S-50S ribosomal subunit interface and may play a role in the structure and function of the aminoacyl-tRNA binding site. This chain is Large ribosomal subunit protein bL19, found in Caldanaerobacter subterraneus subsp. tengcongensis (strain DSM 15242 / JCM 11007 / NBRC 100824 / MB4) (Thermoanaerobacter tengcongensis).